The chain runs to 513 residues: Maturase K (513 aa).

This sequence belongs to the intron maturase 2 family. MatK subfamily.

It is found in the plastid. The protein resides in the chloroplast. Its function is as follows. Usually encoded in the trnK tRNA gene intron. Probably assists in splicing its own and other chloroplast group II introns. The chain is Maturase K from Eleusine indica (Goosegrass).